The primary structure comprises 155 residues: uncharacterized protein (155 aa).

Residues 7–154 (LQINYKTLEE…VWLPESVELQ (148 aa)) enclose the N-acetyltransferase domain.

This is an uncharacterized protein from Brevibacillus brevis (strain 47 / JCM 6285 / NBRC 100599).